Reading from the N-terminus, the 206-residue chain is Phosphatidyl-N-methylethanolamine N-methyltransferase (206 aa).

The Lumenal portion of the chain corresponds to methionine 1–serine 20. An intramembrane region (helical) is located at residues serine 21–alanine 41. At arginine 42–methionine 53 the chain is on the lumenal side. Residues cysteine 54–valine 74 form a helical membrane-spanning segment. The Cytoplasmic portion of the chain corresponds to arginine 75–glycine 101. Residues valine 102–threonine 122 traverse the membrane as a helical segment. Residue glycine 106–glycine 108 participates in S-adenosyl-L-methionine binding. The Lumenal portion of the chain corresponds to glycine 123–lysine 165. Residues glycine 166–arginine 186 traverse the membrane as a helical segment. Over tryptophan 187–methionine 206 the chain is Cytoplasmic. Glutamate 188–glutamate 189 serves as a coordination point for S-adenosyl-L-methionine.

The protein belongs to the class VI-like SAM-binding methyltransferase superfamily. PEMT/PEM2 methyltransferase family.

The protein resides in the endoplasmic reticulum membrane. The protein localises to the mitochondrion membrane. It catalyses the reaction a 1,2-diacyl-sn-glycero-3-phosphoethanolamine + S-adenosyl-L-methionine = a 1,2-diacyl-sn-glycero-3-phospho-N-methylethanolamine + S-adenosyl-L-homocysteine + H(+). The enzyme catalyses a 1,2-diacyl-sn-glycero-3-phospho-N-methylethanolamine + S-adenosyl-L-methionine = a 1,2-diacyl-sn-glycero-3-phospho-N,N-dimethylethanolamine + S-adenosyl-L-homocysteine + H(+). It carries out the reaction a 1,2-diacyl-sn-glycero-3-phospho-N,N-dimethylethanolamine + S-adenosyl-L-methionine = a 1,2-diacyl-sn-glycero-3-phosphocholine + S-adenosyl-L-homocysteine + H(+). The protein operates within phospholipid metabolism; phosphatidylcholine biosynthesis. Its function is as follows. Catalyzes the second two steps of the methylation pathway of phosphatidylcholine biosynthesis, the SAM-dependent methylation of phosphatidylmonomethylethanolamine (PMME) to phosphatidyldimethylethanolamine (PDME) and of PDME to phosphatidylcholine (PC). Can also catalyze the first methylation reaction of PE to PMME in the absence of PE methyltransferase CHO2. The chain is Phosphatidyl-N-methylethanolamine N-methyltransferase from Saccharomyces cerevisiae (strain ATCC 204508 / S288c) (Baker's yeast).